The chain runs to 110 residues: Putative membrane protein insertion efficiency factor (110 aa).

It belongs to the UPF0161 family.

The protein resides in the cell inner membrane. Functionally, could be involved in insertion of integral membrane proteins into the membrane. The protein is Putative membrane protein insertion efficiency factor of Aliarcobacter butzleri (strain RM4018) (Arcobacter butzleri).